We begin with the raw amino-acid sequence, 703 residues long: Polyribonucleotide nucleotidyltransferase (703 aa).

Mg(2+) is bound by residues D486 and D492. The KH domain maps to P553–I612. The S1 motif domain occupies G622–K690.

It belongs to the polyribonucleotide nucleotidyltransferase family. Mg(2+) is required as a cofactor.

Its subcellular location is the cytoplasm. The enzyme catalyses RNA(n+1) + phosphate = RNA(n) + a ribonucleoside 5'-diphosphate. In terms of biological role, involved in mRNA degradation. Catalyzes the phosphorolysis of single-stranded polyribonucleotides processively in the 3'- to 5'-direction. This chain is Polyribonucleotide nucleotidyltransferase, found in Macrococcus caseolyticus (strain JCSC5402) (Macrococcoides caseolyticum).